The chain runs to 342 residues: tRNA dimethylallyltransferase (342 aa).

The tract at residues 1 to 30 (MSANGPAAEPADGGRAVPAGGGEAVPAGGG) is disordered. A compositionally biased stretch (gly residues) spans 19-30 (AGGGEAVPAGGG). Residue 49-56 (GPTAAGKS) coordinates ATP. 51–56 (TAAGKS) lines the substrate pocket. An interaction with substrate tRNA region spans residues 74–77 (DSMQ).

It belongs to the IPP transferase family. In terms of assembly, monomer. The cofactor is Mg(2+).

The catalysed reaction is adenosine(37) in tRNA + dimethylallyl diphosphate = N(6)-dimethylallyladenosine(37) in tRNA + diphosphate. Catalyzes the transfer of a dimethylallyl group onto the adenine at position 37 in tRNAs that read codons beginning with uridine, leading to the formation of N6-(dimethylallyl)adenosine (i(6)A). In Salinispora arenicola (strain CNS-205), this protein is tRNA dimethylallyltransferase.